The sequence spans 1465 residues: DNA polymerase III PolC-type (1465 aa).

The Exonuclease domain occupies 431-583 (DVETTGLSAM…YDAEATGRLL (153 aa)).

The protein belongs to the DNA polymerase type-C family. PolC subfamily.

The protein localises to the cytoplasm. It carries out the reaction DNA(n) + a 2'-deoxyribonucleoside 5'-triphosphate = DNA(n+1) + diphosphate. Required for replicative DNA synthesis. This DNA polymerase also exhibits 3' to 5' exonuclease activity. In Streptococcus pyogenes, this protein is DNA polymerase III PolC-type.